The sequence spans 209 residues: NADH-ubiquinone oxidoreductase subunit 9 (209 aa).

It belongs to the complex I 30 kDa subunit family. Complex I is composed of about 30 different subunits.

It is found in the mitochondrion inner membrane. The catalysed reaction is a ubiquinone + NADH + 5 H(+)(in) = a ubiquinol + NAD(+) + 4 H(+)(out). Its function is as follows. Core subunit of the mitochondrial membrane respiratory chain NADH dehydrogenase (Complex I) that is believed to belong to the minimal assembly required for catalysis. Complex I functions in the transfer of electrons from NADH to the respiratory chain. The immediate electron acceptor for the enzyme is believed to be ubiquinone. In Paramecium tetraurelia, this protein is NADH-ubiquinone oxidoreductase subunit 9 (NAD9).